The following is a 637-amino-acid chain: tRNA uridine 5-carboxymethylaminomethyl modification enzyme MnmG (637 aa).

FAD is bound by residues 15 to 20 (GAGHAG), isoleucine 127, and serine 182. 276–290 (GPRYCPSIEDKIVRF) lines the NAD(+) pocket. An FAD-binding site is contributed by glutamine 373.

Belongs to the MnmG family. As to quaternary structure, homodimer. Heterotetramer of two MnmE and two MnmG subunits. Requires FAD as cofactor.

The protein localises to the cytoplasm. Its function is as follows. NAD-binding protein involved in the addition of a carboxymethylaminomethyl (cmnm) group at the wobble position (U34) of certain tRNAs, forming tRNA-cmnm(5)s(2)U34. This Streptococcus pneumoniae (strain Hungary19A-6) protein is tRNA uridine 5-carboxymethylaminomethyl modification enzyme MnmG.